The chain runs to 1970 residues: MHGGGPPSGDSACPLRTIKRVQFGVLSPDELKRMSVTEGGIKYPETTEGGRPKLGGLMDPRQGVIERTGRCQTCAGNMTECPGHFGHIELAKPVFHVGFLVKTMKVLRCVCFFCSKLLVDSNNPKIKDILAKSKGQPKKRLTHVYDLCKGKNICEGGEEMDNKFGVEQPEGDEDLTKEKGHGGCGRYQPRIRRSGLELYAEWKHVNEDSQEKKILLSPERVHEIFKRISDEECFVLGMEPRYARPEWMIVTVLPVPPLSVRPAVVMQGSARNQDDLTHKLADIVKINNQLRRNEQNGAAAHVIAEDVKLLQFHVATMVDNELPGLPRAMQKSGRPLKSLKQRLKGKEGRVRGNLMGKRVDFSARTVITPDPNLSIDQVGVPRSIAANMTFAEIVTPFNIDRLQELVRRGNSQYPGAKYIIRDNGDRIDLRFHPKPSDLHLQTGYKVERHMCDGDIVIFNRQPTLHKMSMMGHRVRILPWSTFRLNLSVTTPYNADFDGDEMNLHLPQSLETRAEIQELAMVPRMIVTPQSNRPVMGIVQDTLTAVRKFTKRDVFLERGEVMNLLMFLSTWDGKVPQPAILKPRPLWTGKQIFSLIIPGHINCIRTHSTHPDDEDSGPYKHISPGDTKVVVENGELIMGILCKKSLGTSAGSLVHISYLEMGHDITRLFYSNIQTVINNWLLIEGHTIGIGDSIADSKTYQDIQNTIKKAKQDVIEVIEKAHNNELEPTPGNTLRQTFENQVNRILNDARDKTGSSAQKSLSEYNNFKSMVVSGAKGSKINISQVIAVVGQQNVEGKRIPFGFKHRTLPHFIKDDYGPESRGFVENSYLAGLTPTEFFFHAMGGREGLIDTAVKTAETGYIQRRLIKSMESVMVKYDATVRNSINQVVQLRYGEDGLAGESVEFQNLATLKPSNKAFEKKFRFDYTNERALRRTLQEDLVKDVLSNAHIQNELEREFERMREDREVLRVIFPTGDSKVVLPCNLLRMIWNAQKIFHINPRLPSDLHPIKVVEGVKELSKKLVIVNGDDPLSRQAQENATLLFNIHLRSTLCSRRMAEEFRLSGEAFDWLLGEIESKFNQAIAHPGEMVGALAAQSLGEPATQMTLNTFHYAGVSAKNVTLGVPRLKELINISKKPKTPSLTVFLLGQSARDAERAKDILCRLEHTTLRKVTANTAIYYDPNPQSTVVAEDQEWVNVYYEMPDFDVARISPWLLRVELDRKHMTDRKLTMEQIAEKINAGFGDDLNCIFNDDNAEKLVLRIRIMNSDENKMQEEEEVVDKMDDDVFLRCIESNMLTDMTLQGIEQISKVYMHLPQTDNKKKIIITEDGEFKALQEWILETDGVSLMRVLSEKDVDPVRTTSNDIVEIFTVLGIEAVRKALERELYHVISFDGSYVNYRHLALLCDTMTCRGHLMAITRHGVNRQDTGPLMKCSFEETVDVLMEAAAHGESDPMKGVSENIMLGQLAPAGTGCFDLLLDAEKCKYGMEIPTNIPGLGAAGPTGMFFGSAPSPMGGISPAMTPWNQGATPAYGAWSPSVGSGMTPGAAGFSPSAASDASGFSPGYSPAWSPTPGSPGSPGPSSPYIPSPGGAMSPSYSPTSPAYEPRSPGGYTPQSPSYSPTSPSYSPTSPSYSPTSPNYSPTSPSYSPTSPSYSPTSPSYSPTSPSYSPTSPSYSPTSPSYSPTSPSYSPTSPSYSPTSPSYSPTSPSYSPTSPSYSPTSPSYSPTSPSYSPTSPSYSPTSPSYSPTSPNYSPTSPNYTPTSPSYSPTSPSYSPTSPNYTPTSPNYSPTSPSYSPTSPSYSPTSPSYSPSSPRYTPQSPTYTPSSPSYSPSSPSYSPTSPKYTPTSPSYSPSSPEYTPTSPKYSPTSPKYSPTSPKYSPTSPTYSPTTPKYSPTSPTYSPTSPVYTPTSPKYSPTSPTYSPTSPKYSPTSPTYSPTSPKGSTYSPTSPGYSPTSPTYSLTSPAISPDDSDDEN.

Met1 carries the N-acetylmethionine modification. Position 27 is a phosphoserine (Ser27). Arg67 provides a ligand contact to RNA. 8 residues coordinate Zn(2+): Cys71, Cys74, Cys81, His84, Cys111, Cys114, Cys154, and Cys184. Ser217 carries the post-translational modification Phosphoserine. DNA contacts are provided by Lys346 and Arg358. Position 460 (Arg460) interacts with RNA. Asn493, Asp495, Asp497, and Asp499 together coordinate Mg(2+). Residue Asp499 coordinates RNA. The segment at 832 to 873 (TPTEFFFHAMGGREGLIDTAVKTAETGYIQRRLIKSMESVMV) is bridging helix. The trigger loop stretch occupies residues 1083–1124 (PGEMVGALAAQSLGEPATQMTLNTFHYAGVSAKNVTLGVPRL). Residue Lys1268 forms a Glycyl lysine isopeptide (Lys-Gly) (interchain with G-Cter in ubiquitin); by NEDD4 linkage. DNA-binding residues include Arg1416 and Arg1421. A compositionally biased stretch (low complexity) spans 1546–1568 (FSPSAASDASGFSPGYSPAWSPT). Positions 1546–1970 (FSPSAASDAS…ISPDDSDDEN (425 aa)) are disordered. Residues 1569-1583 (PGSPGSPGPSSPYIP) are compositionally biased toward pro residues. The stretch at 1593 to 1599 (YSPTSPA) is repeat 1. A C-terminal domain (CTD); 52 X 7 AA approximate tandem repeats of Y-[ST]-P-[STQ]-[ST]-P-[SRTEVKGN] region spans residues 1593–1960 (YSPTSPAYEP…SPTYSLTSPA (368 aa)). Residues 1600–1606 (YEPRSPG) form a 2; approximate repeat. Arg1603 is subject to Omega-N-methylated arginine. 48 repeat units span residues 1608-1614 (YTPQSPS), 1615-1621 (YSPTSPS), 1622-1628 (YSPTSPS), 1629-1635 (YSPTSPN), 1636-1642 (YSPTSPS), 1643-1649 (YSPTSPS), 1650-1656 (YSPTSPS), 1657-1663 (YSPTSPS), 1664-1670 (YSPTSPS), 1671-1677 (YSPTSPS), 1678-1684 (YSPTSPS), 1685-1691 (YSPTSPS), 1692-1698 (YSPTSPS), 1699-1705 (YSPTSPS), 1706-1712 (YSPTSPS), 1713-1719 (YSPTSPS), 1720-1726 (YSPTSPS), 1727-1733 (YSPTSPS), 1734-1740 (YSPTSPS), 1741-1747 (YSPTSPN), 1748-1754 (YSPTSPN), 1755-1761 (YTPTSPS), 1762-1768 (YSPTSPS), 1769-1775 (YSPTSPN), 1776-1782 (YTPTSPN), 1783-1789 (YSPTSPS), 1790-1796 (YSPTSPS), 1797-1803 (YSPTSPS), 1804-1810 (YSPSSPR), 1811-1817 (YTPQSPT), 1818-1824 (YTPSSPS), 1825-1831 (YSPSSPS), 1832-1838 (YSPTSPK), 1839-1845 (YTPTSPS), 1846-1852 (YSPSSPE), 1853-1859 (YTPTSPK), 1860-1866 (YSPTSPK), 1867-1873 (YSPTSPK), 1874-1880 (YSPTSPT), 1881-1887 (YSPTTPK), 1888-1894 (YSPTSPT), 1895-1901 (YSPTSPV), 1902-1908 (YTPTSPK), 1909-1915 (YSPTSPT), 1916-1922 (YSPTSPK), 1923-1929 (YSPTSPT), 1930-1936 (YSPTSPK), and 1940-1946 (YSPTSPG). Residues 1608–1959 (YTPQSPSYSP…TSPTYSLTSP (352 aa)) are compositionally biased toward low complexity. At Arg1810 the chain carries Asymmetric dimethylarginine; alternate. A Symmetric dimethylarginine; alternate modification is found at Arg1810. Lys1838 carries the post-translational modification N6,N6-dimethyllysine; alternate. The residue at position 1838 (Lys1838) is an N6-methyllysine; alternate. Phosphothreonine is present on Thr1840. Residues Ser1843, Ser1845, Ser1847, Ser1849, and Ser1850 each carry the phosphoserine modification. The residue at position 1854 (Thr1854) is a Phosphothreonine. Ser1857 bears the Phosphoserine mark. At Lys1859 the chain carries N6,N6-dimethyllysine; alternate. Position 1859 is an N6-methyllysine; alternate (Lys1859). Residue Tyr1860 is modified to Phosphotyrosine. Ser1861 bears the Phosphoserine mark. A Phosphothreonine modification is found at Thr1863. The residue at position 1864 (Ser1864) is a Phosphoserine. Lys1866 is subject to N6,N6-dimethyllysine; alternate. Lys1866 carries the post-translational modification N6-methyllysine; alternate. An N6,N6,N6-trimethyllysine; alternate modification is found at Lys1866. Lys1866 bears the N6-acetyllysine; alternate mark. At Tyr1867 the chain carries Phosphotyrosine. Position 1868 is a phosphoserine (Ser1868). Phosphothreonine is present on Thr1870. Lys1873 is modified (N6,N6-dimethyllysine; alternate). Lys1873 is subject to N6-methyllysine; alternate. Residue Lys1873 is modified to N6,N6,N6-trimethyllysine; alternate. Residue Tyr1874 is modified to Phosphotyrosine. Ser1875 carries the phosphoserine modification. A Phosphothreonine modification is found at Thr1877. The residue at position 1878 (Ser1878) is a Phosphoserine. At Tyr1881 the chain carries Phosphotyrosine. Ser1882 is subject to Phosphoserine. Thr1885 bears the Phosphothreonine mark. Position 1887 is an N6,N6-dimethyllysine; alternate (Lys1887). The residue at position 1887 (Lys1887) is an N6-methyllysine; alternate. Lys1887 carries the N6-acetyllysine; alternate modification. Position 1894 is a phosphothreonine (Thr1894). 3 positions are modified to phosphoserine: Ser1896, Ser1899, and Ser1906. The residue at position 1908 (Lys1908) is an N6,N6-dimethyllysine. Position 1909 is a phosphotyrosine (Tyr1909). Thr1912 carries the post-translational modification Phosphothreonine. A Phosphoserine modification is found at Ser1913. A Phosphothreonine modification is found at Thr1915. Phosphotyrosine is present on Tyr1916. Position 1917 is a phosphoserine (Ser1917). Residue Thr1919 is modified to Phosphothreonine. Ser1920 carries the phosphoserine modification. An N6,N6-dimethyllysine; alternate modification is found at Lys1922. Lys1922 carries the N6-methyllysine; alternate modification. N6-acetyllysine; alternate is present on Lys1922. Tyr1923 bears the Phosphotyrosine mark. Phosphothreonine is present on Thr1926. Phosphoserine is present on Ser1927. At Thr1929 the chain carries Phosphothreonine. Tyr1930 is modified (phosphotyrosine). Ser1931 is modified (phosphoserine). Thr1933 carries the phosphothreonine modification. Position 1934 is a phosphoserine (Ser1934). Lys1936 is subject to N6,N6-dimethyllysine; alternate. Lys1936 is modified (N6-methyllysine; alternate). Lys1936 carries the post-translational modification N6-acetyllysine; alternate. A 51; approximate repeat occupies 1947–1953 (YSPTSPT). The stretch at 1954–1960 (YSLTSPA) is one 52; approximate repeat.

The protein belongs to the RNA polymerase beta' chain family. As to quaternary structure, component of the RNA polymerase II (Pol II) core complex consisting of 12 subunits: a ten-subunit catalytic core composed of POLR2A/RPB1, POLR2B/RPB2, POLR2C/RPB3, POLR2I/RPB9, POLR2J/RPB11, POLR2E/RPABC1, POLR2F/RPABC2, POLR2H/RPABC3, POLR2K/RPABC4 and POLR2L/RPABC5 and a mobile stalk composed of two subunits POLR2D/RPB4 and POLR2G/RPB7, protruding from the core and functioning primarily in transcription initiation. Part of Pol II(G) complex, in which Pol II core associates with an additional subunit POLR2M; unlike conventional Pol II, Pol II(G) functions as a transcriptional repressor. Part of Pol II pre-initiation complex (PIC), in which Pol II core assembles with Mediator, general transcription factors and other specific initiation factors including GTF2E1, GTF2E2, GTF2F1, GTF2F2, TCEA1, ERCC2, ERCC3, GTF2H2, GTF2H3, GTF2H4, GTF2H5, GTF2A1, GTF2A2, GTF2B and TBP; this large multi-subunit PIC complex mediates DNA unwinding and targets Pol II core to the transcription start site where the first phosphodiester bond forms. Component of a complex which is at least composed of HTATSF1/Tat-SF1, the P-TEFb complex components CDK9 and CCNT1, Pol II, SUPT5H, and NCL/nucleolin. The large PER complex involved in the repression of transcriptional termination is composed of at least PER2, CDK9, DDX5, DHX9, NCBP1 and POLR2A (active). Interacts (via the C-terminal domain (CTD)) with U2AF2; recruits PRPF19 and the Prp19 complex to the pre-mRNA and may couple transcription to pre-mRNA splicing. Interacts (via the C-terminal domain (CTD)) with SMN1/SMN2; recruits SMN1/SMN2 to RNA Pol II elongation complexes. Interacts via the phosphorylated C-terminal domain with WDR82 and with SETD1A and SETD1B only in the presence of WDR82. When phosphorylated at 'Ser-5', interacts with MEN1; the unphosphorylated form, or phosphorylated at 'Ser-2' does not interact. When phosphorylated at 'Ser-5', interacts with ZMYND8; the form phosphorylated at 'Ser-2' does not interact. When phosphorylated at 'Ser-2', interacts with SUPT6H (via SH2 domain). Interacts with RECQL5 and TCEA1; binding of RECQL5 prevents TCEA1 binding. The phosphorylated C-terminal domain interacts with FNBP3. The phosphorylated C-terminal domain interacts with SYNCRIP. Interacts with ATF7IP. Interacts with DDX5. Interacts with WWP2. Interacts with SETX. Interacts (phosphorylated) with PIH1D1. Interacts (via the C-terminal domain (CTD)) with TDRD3. Interacts with PRMT5. Interacts with XRN2. Interacts with SAFB/SAFB1. Interacts with CCNL1. Interacts with CCNL2. Interacts with MYO1C. Interacts with PAF1. Interacts with SFRS19. Interacts (via C-terminus) with CMTR1. Interacts (via C-terminus) with CTDSP1. Interacts (via C-terminus) with SCAF8. Interacts (via the C-terminal domain (CTD)) with CCNT2. Interacts with FUS. Interacts with MCM3AP isoform GANP. Interacts with kinase SRPK2; the interaction occurs during the co-transcriptional formation of inappropriate R-loops. Interacts with SETD2. Interacts with UVSSA. Interacts with ERCC6. Interacts with the TFIIH complex. Mg(2+) serves as cofactor. Post-translationally, the tandem heptapeptide repeats in the C-terminal domain (CTD) can be highly phosphorylated. The phosphorylation activates Pol II. Phosphorylation occurs mainly at residues 'Ser-2' and 'Ser-5' of the heptapeptide repeat and is mediated, at least, by CDK7 and CDK9. POLR2A associated with DNA is specifically phosphorylated at 'Ser-5' of the CTD by CDK7, promoting transcription initiation by triggering dissociation from DNA. Phosphorylated at 'Ser-2', Ser-5' and 'Ser-7' of the CTD by CDK9 (P-TEFb complex), promoting transcription elongation. Phosphorylation also takes place at 'Ser-7' of the heptapeptide repeat, which is required for efficient transcription of snRNA genes and processing of the transcripts. The phosphorylation state is believed to result from the balanced action of site-specific CTD kinases and phosphatases, and a 'CTD code' that specifies the position of Pol II within the transcription cycle has been proposed. Dephosphorylated by the INTAC complex when transcripts are unfavorably configured for transcriptional elongation, leading to premature transcription termination: dephosphorylation is mediated by the PPP2CA component of the INTAC complex. In response to replication stress, dephosphorylated at 'Ser-5' of the CTD by the PNUTS-PP1 complex, promoting RNA polymerase II degradation. Dephosphorylated by the protein phosphatase CTDSP1. Dephosphorylated at 'Ser-2' following UV irradiation. In terms of processing, among tandem heptapeptide repeats of the C-terminal domain (CTD) some do not match the Y-S-P-T-S-P-S consensus, the seventh serine residue 'Ser-7' being replaced by a lysine. 'Lys-7' in these non-consensus heptapeptide repeats can be alternatively acetylated, methylated and dimethylated. EP300 is one of the enzyme able to acetylate 'Lys-7'. Acetylation at 'Lys-7' of non-consensus heptapeptide repeats is associated with 'Ser-2' phosphorylation and active transcription. Regulates initiation or early elongation steps of transcription specially for inducible genes. Methylated at Arg-1810 prior to transcription initiation when the CTD is hypophosphorylated, phosphorylation at Ser-1805 and Ser-1808 preventing this methylation. Symmetrically or asymmetrically dimethylated at Arg-1810 by PRMT5 and CARM1 respectively. Symmetric or asymmetric dimethylation modulates interactions with CTD-binding proteins like SMN1/SMN2 and TDRD3. SMN1/SMN2 interacts preferentially with the symmetrically dimethylated form while TDRD3 interacts with the asymmetric form. Through the recruitment of SMN1/SMN2, symmetric dimethylation is required for resolving RNA-DNA hybrids created by RNA polymerase II, that form R-loop in transcription terminal regions, an important step in proper transcription termination. CTD dimethylation may also facilitate the expression of select RNAs. Among tandem heptapeptide repeats of the C-terminal domain (CTD) some do not match the Y-S-P-T-S-P-S consensus, the seventh serine residue 'Ser-7' being replaced by a lysine. 'Lys-7' in these non-consensus heptapeptide repeats can be alternatively acetylated, methylated, dimethylated and trimethylated. Methylation occurs in the earliest transcription stages and precedes or is concomitant to 'Ser-5' and 'Ser-7' phosphorylation. Dimethylation and trimehtylation at 'Lys-7' of non-consensus heptapeptide repeats are exclusively associated with phosphorylated CTD. Post-translationally, following transcription stress, the elongating form of RNA polymerase II (RNA pol IIo) is ubiquitinated by the DCX(ERCC8) complex (also named CSA complex) on Lys-1268 at DNA damage sites without leading to degradation: ubiquitination promotes RNA pol IIo backtracking to allow access by the transcription-coupled nucleotide excision repair (TC-NER) machinery. At stalled RNA pol II where TC-NER has failed, RBX1-mediated polybiquitination at Lys-1268 may lead to proteasome-mediated degradation in a UBAP2- and UBAP2L-dependent manner; presumably to halt global transcription and enable 'last resort' DNA repair pathways. Ubiquitinated by the BCR(ARMC5) complex when transcripts are unfavorably configured for transcriptional elongation: the BCR(ARMC5) complex specifically catalyzes ubiquitination of POLR2A phosphorylated at 'Ser-5' of the C-terminal domain (CTD), leading to POLR2A degradation. Ubiquitination by the BCR(ARMC5) complex takes place at residues distinct from Lys-1268. Ubiquitinated by WWP2 leading to proteasomal degradation.

It is found in the nucleus. The protein resides in the cytoplasm. It localises to the chromosome. It catalyses the reaction RNA(n) + a ribonucleoside 5'-triphosphate = RNA(n+1) + diphosphate. The enzyme catalyses a 3'-end ribonucleotidyl-ribonucleotide-RNA + H2O = a 3'-end ribonucleotide-RNA + a ribonucleoside 5'-phosphate + H(+). In terms of biological role, catalytic core component of RNA polymerase II (Pol II), a DNA-dependent RNA polymerase which synthesizes mRNA precursors and many functional non-coding RNAs using the four ribonucleoside triphosphates as substrates. Pol II-mediated transcription cycle proceeds through transcription initiation, transcription elongation and transcription termination stages. During transcription initiation, Pol II pre-initiation complex (PIC) is recruited to DNA promoters, with focused-type promoters containing either the initiator (Inr) element, or the TATA-box found in cell-type specific genes and dispersed-type promoters that often contain hypomethylated CpG islands usually found in housekeeping genes. Once the polymerase has escaped from the promoter it enters the elongation phase during which RNA is actively polymerized, based on complementarity with the template DNA strand. Transcription termination involves the release of the RNA transcript and polymerase from the DNA. Forms Pol II active center together with the second largest subunit POLR2B/RPB2. Appends one nucleotide at a time to the 3' end of the nascent RNA, with POLR2A/RPB1 most likely contributing a Mg(2+)-coordinating DxDGD motif, and POLR2B/RPB2 participating in the coordination of a second Mg(2+) ion and providing lysine residues believed to facilitate Watson-Crick base pairing between the incoming nucleotide and template base. Typically, Mg(2+) ions direct a 5' nucleoside triphosphate to form a phosphodiester bond with the 3' hydroxyl of the preceding nucleotide of the nascent RNA, with the elimination of pyrophosphate. The reversible pyrophosphorolysis can occur at high pyrophosphate concentrations. Can proofread the nascent RNA transcript by means of a 3' -&gt; 5' exonuclease activity. If a ribonucleotide is mis-incorporated, backtracks along the template DNA and cleaves the phosphodiester bond releasing the mis-incorporated 5'-ribonucleotide. Through its unique C-terminal domain (CTD, 52 heptapeptide tandem repeats) serves as a platform for assembly of factors that regulate transcription initiation, elongation and termination. CTD phosphorylation on Ser-5 mediates Pol II promoter escape, whereas phosphorylation on Ser-2 is required for Pol II pause release during transcription elongation and further pre-mRNA processing. Additionally, the regulation of gene expression levels depends on the balance between methylation and acetylation levels of the CTD-lysines. Initiation or early elongation steps of transcription of growth-factor-induced immediate early genes are regulated by the acetylation status of the CTD. Methylation and dimethylation have a repressive effect on target genes expression. Cooperates with mRNA splicing machinery in co-transcriptional 5'-end capping and co-transcriptional splicing of pre-mRNA. Its function is as follows. RNA-dependent RNA polymerase that catalyzes the extension of a non-coding RNA (ncRNA) at the 3'-end using the four ribonucleoside triphosphates as substrates. An internal ncRNA sequence near the 3'-end serves as a template in a single-round Pol II-mediated RNA polymerization reaction. May decrease the stability of ncRNAs that repress Pol II-mediated gene transcription. The polypeptide is DNA-directed RNA polymerase II subunit RPB1 (POLR2A) (Bos taurus (Bovine)).